A 272-amino-acid chain; its full sequence is Small ribosomal subunit protein uS3 (272 aa).

In terms of domain architecture, KH type-2 spans 43–111 (IRELMTTGME…QIQLNILEVK (69 aa)). Residues 218 to 272 (AKEAAQPSGRGRGGERRGGGERRRRNDRAERAPRQENAGAGAETPAAAPAEGGNA) form a disordered region. The span at 229-238 (RGGERRGGGE) shows a compositional bias: basic and acidic residues. The segment covering 253–272 (ENAGAGAETPAAAPAEGGNA) has biased composition (low complexity).

The protein belongs to the universal ribosomal protein uS3 family. In terms of assembly, part of the 30S ribosomal subunit. Forms a tight complex with proteins S10 and S14.

In terms of biological role, binds the lower part of the 30S subunit head. Binds mRNA in the 70S ribosome, positioning it for translation. This Micrococcus luteus (strain ATCC 4698 / DSM 20030 / JCM 1464 / CCM 169 / CCUG 5858 / IAM 1056 / NBRC 3333 / NCIMB 9278 / NCTC 2665 / VKM Ac-2230) (Micrococcus lysodeikticus) protein is Small ribosomal subunit protein uS3.